The chain runs to 266 residues: Hydroxyethylthiazole kinase (266 aa).

Met45 lines the substrate pocket. ATP-binding residues include Lys121 and Ser167. Gly194 provides a ligand contact to substrate.

The protein belongs to the Thz kinase family. Requires Mg(2+) as cofactor.

The enzyme catalyses 5-(2-hydroxyethyl)-4-methylthiazole + ATP = 4-methyl-5-(2-phosphooxyethyl)-thiazole + ADP + H(+). It participates in cofactor biosynthesis; thiamine diphosphate biosynthesis; 4-methyl-5-(2-phosphoethyl)-thiazole from 5-(2-hydroxyethyl)-4-methylthiazole: step 1/1. In terms of biological role, catalyzes the phosphorylation of the hydroxyl group of 4-methyl-5-beta-hydroxyethylthiazole (THZ). The polypeptide is Hydroxyethylthiazole kinase (Methanocella arvoryzae (strain DSM 22066 / NBRC 105507 / MRE50)).